Here is a 505-residue protein sequence, read N- to C-terminus: Succinyl-CoA:acetate CoA-transferase (505 aa).

269–273 (GVGNV) is a CoA binding site. Residue Glu-294 is the 5-glutamyl coenzyme A thioester intermediate of the active site. CoA is bound by residues Ile-364, Asn-384, Gly-388, and Lys-408.

It belongs to the acetyl-CoA hydrolase/transferase family. As to quaternary structure, homodimer.

The catalysed reaction is succinyl-CoA + acetate = succinate + acetyl-CoA. Its pathway is metabolic intermediate biosynthesis; acetyl-CoA biosynthesis. With respect to regulation, subject to competitive inhibition by coenzyme A (CoA). Utilizes succinyl-CoA to convert toxic acetate to acetyl-CoA and succinate. Required for growth on acetic acid and for resistance to high levels of acetic acid. Also has low activity with acetoacetate as substrate. The polypeptide is Succinyl-CoA:acetate CoA-transferase (Acetobacter aceti).